We begin with the raw amino-acid sequence, 958 residues long: MLRSKTFLKKTRAGGVVKIVREHYLRDDIGCGAPACSACGGAHAGPALELQPRDQASSLCPWPHYLLPDTNVLLHQIDVLEHPAIRNVIVLQTVMQEVRNRSAPIYKRIRDVTNNQEKHFYTFTNEHHKETYIEQEQGENANDRNDRAIRVAAKWYNEHLKRVAADSQLQVILITNDRKNKEKAVQEGIPAFTCEEYVKSLTANPELIDRLAYLSDEMNEIESGKIIFSEHLPLSKLQQGIKSGSYLQGTFRASRENYLEATVWIHGDKEEEKEILIQGIKHLNRAVHEDIVAVELLPRSQWVAPSSVVLDDEGQNEDDVEKDEERELLLKTAVSEKMLRPTGRVVGIIKRNWRPYCGMLSKSDIKESRRHLFTPADKRIPRIRIETRQASALEGRRIIVAIDGWPRNSRYPNGHFVKNLGDVGEKETETEVLLLEHDVPHQPFSQAVLSFLPRMPWSITEEDMKNREDLRHLCVCSVDPPGCTDIDDALHCRELSNGNLEVGVHIADVSHFIRPGNALDQESARRGTTVYLCEKRIDMVPELLSSNLCSLRSNVDRLAFSCIWEMNHNAEILKTRFTKSVINSKASLTYAEAQMRIDSAAMNDDITTSLRGLNQLAKILKKGRIEKGALTLSSPEIRFHMDSETHDPIDLQTKELRETNSMVEEFMLLANISVAKKIHEEFSEHALLRKHPAPPPSNYDILVKAAKSKNLQIKTDTAKSLADSLDRAESPDFPYLNTLLRILATRCMMQAVYFCSGMDNDFHHYGLASPIYTHFTSPIRRYADIIVHRLLAVAIGADCTYPELTDKHKLSDICKNLNFRHKMAQYAQRASVAFHTQLFFKSKGIVSEEAYILFVRKNAIVVLIPKYGLEGTVFFEEKDKPKPRLAYDDEIPSLRIEGTVFHVFDKVKVKITLDSSNLQHQKIRMALVEPQIPGINIPPNVADKALTAPGGKKRKLEK.

The residue at position 1 (Met-1) is an N-acetylmethionine. Lys-18 carries the N6-acetyllysine modification. Residues 64–182 (HYLLPDTNVL…LITNDRKNKE (119 aa)) enclose the PINc domain. Ser-215 carries the post-translational modification Phosphoserine. In terms of domain architecture, CSD1 spans 227–319 (IFSEHLPLSK…LDDEGQNEDD (93 aa)). The 67-residue stretch at 372 to 438 (LFTPADKRIP…ETEVLLLEHD (67 aa)) folds into the CSD2 domain. The RNB domain occupies 467–792 (REDLRHLCVC…ADIIVHRLLA (326 aa)).

The protein belongs to the RNR ribonuclease family. Component of the RNA exosome complex; within the complex interacts with EXOSC4, EXOSC7 and EXOSC9 of the exosome core complex (Exo-9). The catalytically inactive RNA exosome core complex (Exo-9) associates with the catalytic subunit EXOSC10/RRP6. Exo-9 may associate with DIS3 to form the nucleolar exosome complex, or DIS3L to form the cytoplasmic exosome complex. Exo-9 is formed by a hexameric base ring consisting of the heterodimers EXOSC4-EXOSC9, EXOSC5-EXOSC8 and EXOSC6-EXOSC7, and a cap ring consisting of EXOSC1, EXOSC2 and EXOSC3; DIS3 associates with the base ring of Exo-9. The RNA exosome complex associates with cofactors C1D/RRP47, MPHOSPH6/MPP6 and MTREX/MTR4. Interacts with DHX34; the interaction is RNA-independent. Mg(2+) is required as a cofactor. Requires Mn(2+) as cofactor.

It localises to the cytoplasm. The protein localises to the nucleus. The protein resides in the nucleolus. Its subcellular location is the nucleoplasm. Its function is as follows. Putative catalytic component of the RNA exosome complex which has 3'-&gt;5' exoribonuclease activity and participates in a multitude of cellular RNA processing and degradation events. In the nucleus, the RNA exosome complex is involved in proper maturation of stable RNA species such as rRNA, snRNA and snoRNA, in the elimination of RNA processing by-products and non-coding 'pervasive' transcripts, such as antisense RNA species and promoter-upstream transcripts (PROMPTs), and of mRNAs with processing defects, thereby limiting or excluding their export to the cytoplasm. The RNA exosome may be involved in Ig class switch recombination (CSR) and/or Ig variable region somatic hypermutation (SHM) by targeting AICDA deamination activity to transcribed dsDNA substrates. In the cytoplasm, the RNA exosome complex is involved in general mRNA turnover and specifically degrades inherently unstable mRNAs containing AU-rich elements (AREs) within their 3' untranslated regions, and in RNA surveillance pathways, preventing translation of aberrant mRNAs. It seems to be involved in degradation of histone mRNA. DIS3 has both 3'-5' exonuclease and endonuclease activities. The chain is Exosome complex exonuclease RRP44 (Dis3) from Mus musculus (Mouse).